The primary structure comprises 142 residues: Large ribosomal subunit protein uL11 (142 aa).

It belongs to the universal ribosomal protein uL11 family. As to quaternary structure, part of the ribosomal stalk of the 50S ribosomal subunit. Interacts with L10 and the large rRNA to form the base of the stalk. L10 forms an elongated spine to which L12 dimers bind in a sequential fashion forming a multimeric L10(L12)X complex. One or more lysine residues are methylated.

In terms of biological role, forms part of the ribosomal stalk which helps the ribosome interact with GTP-bound translation factors. In Shewanella sp. (strain W3-18-1), this protein is Large ribosomal subunit protein uL11.